Reading from the N-terminus, the 38-residue chain is Photosystem I reaction center subunit IX (38 aa).

A helical transmembrane segment spans residues 4–24; sequence FLTTAPVFSAIWFTLTAGIMI.

Belongs to the PsaJ family.

Its subcellular location is the plastid. The protein resides in the organellar chromatophore thylakoid membrane. Functionally, may help in the organization of the PsaE and PsaF subunits. The polypeptide is Photosystem I reaction center subunit IX (Paulinella chromatophora).